The sequence spans 184 residues: Thymidine kinase (184 aa).

ATP-binding positions include 10–17 and 83–86; these read GPMYSGKT and DEVQ. The active-site Proton acceptor is Glu84. Positions 140, 143, 173, and 176 each coordinate Zn(2+).

The protein belongs to the thymidine kinase family. Homotetramer.

Its subcellular location is the cytoplasm. The enzyme catalyses thymidine + ATP = dTMP + ADP + H(+). This is Thymidine kinase from Thermotoga sp. (strain RQ2).